Reading from the N-terminus, the 328-residue chain is MSVQHVYEITVIGGGPVGMFAAFYAGLRQADVLLLESLDELGGQTGNLYPAKILYDIGGFPHVSGKDLVTQLKTQLVHFHPEVKTATEVQTIDQDPDGFFTLHTSQGDFRSKTVIVATGGGAFTPRKLAVDYDPALEGKKLFYFVQDLETFRDQEVAVAGGGDSAIDWALALEPVAKHVSLIHRRAKFRGLEASVAALEKSSVTIQTPYLIESVTPQDDQLAIQLKEVRGEAQPTLTVDKLLINYGFVTDKHHLQAWQLDTDRNGILVDTQMQTSRPGIFAIGDAVSYAGKLPLIASGFGEAPTAINEALSRLYPDRRQALHSTQLYH.

FAD contacts are provided by Glu36, Gln44, Tyr49, Val89, Phe123, Asp284, and Thr324.

The protein belongs to the ferredoxin--NADP reductase type 2 family. In terms of assembly, homodimer. It depends on FAD as a cofactor.

The catalysed reaction is 2 reduced [2Fe-2S]-[ferredoxin] + NADP(+) + H(+) = 2 oxidized [2Fe-2S]-[ferredoxin] + NADPH. This is Ferredoxin--NADP reductase from Lacticaseibacillus paracasei (strain ATCC 334 / BCRC 17002 / CCUG 31169 / CIP 107868 / KCTC 3260 / NRRL B-441) (Lactobacillus paracasei).